Here is a 410-residue protein sequence, read N- to C-terminus: Scarecrow-like protein 32 (410 aa).

The GRAS domain occupies 18–408; the sequence is LRGCGDANFM…HSVVFATVWV (391 aa). The interval 25-88 is leucine repeat I (LRI); it reads NFMEQLLLHC…AVSKTPTLSS (64 aa). The interval 107–188 is VHIID; sequence LAAFVDLTPW…HFPPFINISY (82 aa). Positions 138–142 match the VHIID motif; it reads VHIVD. The leucine repeat II (LRII) stretch occupies residues 190–227; that stretch reads ELGSKLVNFATTRNITMEFTIVPSTYSDGFSSLLQQLR. The tract at residues 237-329 is PFYRE; that stretch reads LVVNCHMMLR…EAEISWKIEN (93 aa). The interval 332–408 is SAW; the sequence is AKEGAERVER…HSVVFATVWV (77 aa).

It belongs to the GRAS family. As to expression, expressed in seedlings, leaves and flowers.

The protein resides in the nucleus. In terms of biological role, probable transcription factor involved in plant development. The sequence is that of Scarecrow-like protein 32 (SCL32) from Arabidopsis thaliana (Mouse-ear cress).